Here is a 92-residue protein sequence, read N- to C-terminus: Probable Fe(2+)-trafficking protein (92 aa).

The protein belongs to the Fe(2+)-trafficking protein family.

In terms of biological role, could be a mediator in iron transactions between iron acquisition and iron-requiring processes, such as synthesis and/or repair of Fe-S clusters in biosynthetic enzymes. This Shewanella sp. (strain W3-18-1) protein is Probable Fe(2+)-trafficking protein.